A 205-amino-acid polypeptide reads, in one-letter code: Beta-crystallin B2 (205 aa).

Residue alanine 2 is modified to N-acetylalanine. Residues 2 to 16 (ASDHQTQAGKPQSLN) form an N-terminal arm region. Beta/gamma crystallin 'Greek key' domains follow at residues 17 to 56 (PKII…LVQA) and 57 to 101 (GPWV…RPIK). The tract at residues 102 to 106 (VDSQE) is connecting peptide. Beta/gamma crystallin 'Greek key' domains are found at residues 107 to 148 (HKII…RVQS) and 149 to 191 (GTWV…RRIR). A C-terminal arm region spans residues 193 to 205 (MQWHQRGAFHPSN).

The protein belongs to the beta/gamma-crystallin family. Homo/heterodimer, or complexes of higher-order. The structure of beta-crystallin oligomers seems to be stabilized through interactions between the N-terminal arms.

Its function is as follows. Crystallins are the dominant structural components of the vertebrate eye lens. The sequence is that of Beta-crystallin B2 (CRYBB2) from Homo sapiens (Human).